Consider the following 400-residue polypeptide: S-adenosylmethionine synthase (400 aa).

136–141 (GQGSVD) provides a ligand contact to ATP.

Belongs to the AdoMet synthase 2 family. The cofactor is Mg(2+).

The enzyme catalyses L-methionine + ATP + H2O = S-adenosyl-L-methionine + phosphate + diphosphate. Its pathway is amino-acid biosynthesis; S-adenosyl-L-methionine biosynthesis; S-adenosyl-L-methionine from L-methionine: step 1/1. Its function is as follows. Catalyzes the formation of S-adenosylmethionine from methionine and ATP. In Thermoplasma volcanium (strain ATCC 51530 / DSM 4299 / JCM 9571 / NBRC 15438 / GSS1), this protein is S-adenosylmethionine synthase.